The following is a 131-amino-acid chain: Small ribosomal subunit protein eS8 (131 aa).

The segment at 11 to 36 (DLKKPSGGKKGRVRKTKKKALCGGPP) is disordered. Over residues 16-30 (SGGKKGRVRKTKKKA) the composition is skewed to basic residues.

It belongs to the eukaryotic ribosomal protein eS8 family. In terms of assembly, part of the 30S ribosomal subunit.

In Pyrobaculum islandicum (strain DSM 4184 / JCM 9189 / GEO3), this protein is Small ribosomal subunit protein eS8.